Consider the following 270-residue polypeptide: Putative phosphoenolpyruvate synthase regulatory protein (270 aa).

150 to 157 (GVSRCGKT) is a binding site for ADP.

This sequence belongs to the pyruvate, phosphate/water dikinase regulatory protein family. PSRP subfamily.

The enzyme catalyses [pyruvate, water dikinase] + ADP = [pyruvate, water dikinase]-phosphate + AMP + H(+). It catalyses the reaction [pyruvate, water dikinase]-phosphate + phosphate + H(+) = [pyruvate, water dikinase] + diphosphate. Functionally, bifunctional serine/threonine kinase and phosphorylase involved in the regulation of the phosphoenolpyruvate synthase (PEPS) by catalyzing its phosphorylation/dephosphorylation. This Shewanella woodyi (strain ATCC 51908 / MS32) protein is Putative phosphoenolpyruvate synthase regulatory protein.